We begin with the raw amino-acid sequence, 345 residues long: Tetraacyldisaccharide 4'-kinase (345 aa).

Residue 54–61 coordinates ATP; sequence TLGGAGKT.

It belongs to the LpxK family.

It carries out the reaction a lipid A disaccharide + ATP = a lipid IVA + ADP + H(+). It participates in glycolipid biosynthesis; lipid IV(A) biosynthesis; lipid IV(A) from (3R)-3-hydroxytetradecanoyl-[acyl-carrier-protein] and UDP-N-acetyl-alpha-D-glucosamine: step 6/6. Functionally, transfers the gamma-phosphate of ATP to the 4'-position of a tetraacyldisaccharide 1-phosphate intermediate (termed DS-1-P) to form tetraacyldisaccharide 1,4'-bis-phosphate (lipid IVA). This Allorhizobium ampelinum (strain ATCC BAA-846 / DSM 112012 / S4) (Agrobacterium vitis (strain S4)) protein is Tetraacyldisaccharide 4'-kinase.